We begin with the raw amino-acid sequence, 116 residues long: Large ribosomal subunit protein bL19 (116 aa).

The protein belongs to the bacterial ribosomal protein bL19 family.

This protein is located at the 30S-50S ribosomal subunit interface and may play a role in the structure and function of the aminoacyl-tRNA binding site. This chain is Large ribosomal subunit protein bL19 (rplS), found in Streptomyces lividans.